Here is a 483-residue protein sequence, read N- to C-terminus: Probable glycine dehydrogenase (decarboxylating) subunit 2 (483 aa).

The interval 1 to 24 (MLIFDHSRPGRTAAAQLPATGGDL) is disordered. Lys264 is modified (N6-(pyridoxal phosphate)lysine).

The protein belongs to the GcvP family. C-terminal subunit subfamily. The glycine cleavage system is composed of four proteins: P, T, L and H. In this organism, the P 'protein' is a heterodimer of two subunits. It depends on pyridoxal 5'-phosphate as a cofactor.

The catalysed reaction is N(6)-[(R)-lipoyl]-L-lysyl-[glycine-cleavage complex H protein] + glycine + H(+) = N(6)-[(R)-S(8)-aminomethyldihydrolipoyl]-L-lysyl-[glycine-cleavage complex H protein] + CO2. In terms of biological role, the glycine cleavage system catalyzes the degradation of glycine. The P protein binds the alpha-amino group of glycine through its pyridoxal phosphate cofactor; CO(2) is released and the remaining methylamine moiety is then transferred to the lipoamide cofactor of the H protein. In Thiobacillus denitrificans (strain ATCC 25259 / T1), this protein is Probable glycine dehydrogenase (decarboxylating) subunit 2.